Consider the following 381-residue polypeptide: Creatine kinase B-type (381 aa).

Phosphoserine is present on Ser4. The Phosphagen kinase N-terminal domain occupies Lys11 to Gly98. Thr35 is subject to Phosphothreonine. A Glycyl lysine isopeptide (Lys-Gly) (interchain with G-Cter in ubiquitin) cross-link involves residue Lys45. Creatine is bound at residue Val72. The segment covering Arg96 to Leu110 has biased composition (basic and acidic residues). Residues Arg96–Asp122 form a disordered region. Residues Lys101 and Lys107 each participate in a glycyl lysine isopeptide (Lys-Gly) (interchain with G-Cter in ubiquitin) cross-link. A Phosphotyrosine modification is found at Tyr125. In terms of domain architecture, Phosphagen kinase C-terminal spans Tyr125–Leu367. ATP contacts are provided by residues Ser128–Arg132, Arg130, Arg132, and His191. Residues Arg130–Arg138 form an internal MTS-like signal region. Ser199 carries the post-translational modification Phosphoserine. Residue Glu232 participates in creatine binding. Arg236 lines the ATP pocket. 3'-nitrotyrosine is present on Tyr269. Ser285 provides a ligand contact to creatine. Arg292 provides a ligand contact to ATP. Residue Ser309 is modified to Phosphoserine. Residues Arg320, Arg320–Val325, and Asp335 each bind ATP. Thr322 bears the Phosphothreonine mark. Lys381 participates in a covalent cross-link: Glycyl lysine isopeptide (Lys-Gly) (interchain with G-Cter in ubiquitin).

The protein belongs to the ATP:guanido phosphotransferase family. In terms of assembly, dimer of identical or non-identical chains, which can be either B (brain type) or M (muscle type). With MM being the major form in skeletal muscle and myocardium, MB existing in myocardium, and BB existing in many tissues, especially brain. Interacts with SLC12A6 (via C-terminus); the interaction may be required for SLC12A6 potassium-chloride cotransport activity. Post-translationally, ubiquitinated by the ECS(ASB9) complex, leading to its degradation by the proteasome.

It localises to the cytoplasm. The protein localises to the cytosol. Its subcellular location is the mitochondrion. It is found in the cell membrane. The enzyme catalyses creatine + ATP = N-phosphocreatine + ADP + H(+). Functionally, reversibly catalyzes the transfer of phosphate between ATP and various phosphogens (e.g. creatine phosphate). Creatine kinase isoenzymes play a central role in energy transduction in tissues with large, fluctuating energy demands, such as skeletal muscle, heart, brain and spermatozoa. Acts as a key regulator of adaptive thermogenesis as part of the futile creatine cycle: localizes to the mitochondria of thermogenic fat cells and acts by mediating phosphorylation of creatine to initiate a futile cycle of creatine phosphorylation and dephosphorylation. During the futile creatine cycle, creatine and N-phosphocreatine are in a futile cycle, which dissipates the high energy charge of N-phosphocreatine as heat without performing any mechanical or chemical work. The chain is Creatine kinase B-type from Homo sapiens (Human).